The following is a 3106-amino-acid chain: Probable polyketide synthase 29 (3106 aa).

The segment covering 1-11 (MVQNTDNTRNS) has biased composition (polar residues). The segment at 1-20 (MVQNTDNTRNSKLIRDRNDY) is disordered. The 434-residue stretch at 28 to 461 (SGDIAVIGIG…GSNVCLILSE (434 aa)) folds into the Ketosynthase family 3 (KS3) domain. Catalysis depends on for beta-ketoacyl synthase activity residues Cys200, His339, and His384. Positions 661–694 (GVSADIIIGHSLGEVSSPYCSGMIDFQTLCYLTY) are acyl/malonyl transferase. The active-site For acyl/malonyl transferase activity is the Ser671. The tract at residues 961 to 1082 (PSIHGLGNNT…GNFSLTKHNS (122 aa)) is N-terminal hotdog fold. The PKS/mFAS DH domain maps to 961–1266 (PSIHGLGNNT…CALVSLDSNP (306 aa)). His994 serves as the catalytic Proton acceptor; for dehydratase activity. The C-terminal hotdog fold stretch occupies residues 1099 to 1266 (NFTSISKQDF…CALVSLDSNP (168 aa)). The Proton donor; for dehydratase activity role is filled by Asp1171. In terms of domain architecture, Carrier spans 2533–2610 (NNNEIIRSTI…QSIEIILSAH (78 aa)). The residue at position 2570 (Ser2570) is an O-(pantetheine 4'-phosphoryl)serine. Residues 2609 to 2656 (AHNNNNKNNNNNNNINNNNKNNNNNNNKNNNNINNNINNNKNNNNNNN) adopt a coiled-coil conformation. The segment at 2614–2656 (NKNNNNNNNINNNNKNNNNNNNKNNNNINNNINNNKNNNNNNN) is disordered.

Pantetheine 4'-phosphate is required as a cofactor.

Probable polyketide synthase. The sequence is that of Probable polyketide synthase 29 (pks29) from Dictyostelium discoideum (Social amoeba).